Reading from the N-terminus, the 76-residue chain is Sec-independent protein translocase protein TatA (76 aa).

Residues 1–21 form a helical membrane-spanning segment; it reads MGGLSIWHWLIVLLIVALVFG. The tract at residues 40 to 76 is disordered; that stretch reads KDGMKEGETPADAQQLPRSGAVDVNAKETTRSDSNKA. Residues 64 to 76 are compositionally biased toward basic and acidic residues; that stretch reads NAKETTRSDSNKA.

Belongs to the TatA/E family. In terms of assembly, the Tat system comprises two distinct complexes: a TatABC complex, containing multiple copies of TatA, TatB and TatC subunits, and a separate TatA complex, containing only TatA subunits. Substrates initially bind to the TatABC complex, which probably triggers association of the separate TatA complex to form the active translocon.

Its subcellular location is the cell inner membrane. Its function is as follows. Part of the twin-arginine translocation (Tat) system that transports large folded proteins containing a characteristic twin-arginine motif in their signal peptide across membranes. TatA could form the protein-conducting channel of the Tat system. In Burkholderia cenocepacia (strain HI2424), this protein is Sec-independent protein translocase protein TatA.